The following is a 129-amino-acid chain: Small ribosomal subunit protein uS13 (129 aa).

A compositionally biased stretch (basic residues) spans 95 to 114 (NLPVRGQRTKTNARTRRGPR). The segment at 95–129 (NLPVRGQRTKTNARTRRGPRKTVAGRGQKRGATKK) is disordered.

It belongs to the universal ribosomal protein uS13 family. Part of the 30S ribosomal subunit. Forms a loose heterodimer with protein S19. Forms two bridges to the 50S subunit in the 70S ribosome.

Functionally, located at the top of the head of the 30S subunit, it contacts several helices of the 16S rRNA. In the 70S ribosome it contacts the 23S rRNA (bridge B1a) and protein L5 of the 50S subunit (bridge B1b), connecting the 2 subunits; these bridges are implicated in subunit movement. Contacts the tRNAs in the A and P-sites. This is Small ribosomal subunit protein uS13 from Dehalococcoides mccartyi (strain ATCC BAA-2100 / JCM 16839 / KCTC 5957 / BAV1).